The primary structure comprises 101 residues: Small ribosomal subunit protein uS14 (101 aa).

The protein belongs to the universal ribosomal protein uS14 family. As to quaternary structure, part of the 30S ribosomal subunit. Contacts proteins S3 and S10.

Its function is as follows. Binds 16S rRNA, required for the assembly of 30S particles and may also be responsible for determining the conformation of the 16S rRNA at the A site. The chain is Small ribosomal subunit protein uS14 from Xylella fastidiosa (strain 9a5c).